The sequence spans 251 residues: Phosphate import ATP-binding protein PstB (251 aa).

Positions 5-246 constitute an ABC transporter domain; sequence MNSKDVNFWY…PENKKTEDYI (242 aa). Residue 37 to 44 coordinates ATP; it reads GPSGCGKS.

It belongs to the ABC transporter superfamily. Phosphate importer (TC 3.A.1.7) family. As to quaternary structure, the complex is composed of two ATP-binding proteins (PstB), two transmembrane proteins (PstC and PstA) and a solute-binding protein (PstS).

It localises to the cell membrane. It catalyses the reaction phosphate(out) + ATP + H2O = ADP + 2 phosphate(in) + H(+). Part of the ABC transporter complex PstSACB involved in phosphate import. Responsible for energy coupling to the transport system. The protein is Phosphate import ATP-binding protein PstB of Methanococcus maripaludis (strain DSM 14266 / JCM 13030 / NBRC 101832 / S2 / LL).